The sequence spans 201 residues: Small ribosomal subunit protein uS4c (201 aa).

Positions Met90 to Leu153 constitute an S4 RNA-binding domain.

This sequence belongs to the universal ribosomal protein uS4 family. In terms of assembly, part of the 30S ribosomal subunit. Contacts protein S5. The interaction surface between S4 and S5 is involved in control of translational fidelity.

It localises to the plastid. The protein localises to the chloroplast. Its function is as follows. One of the primary rRNA binding proteins, it binds directly to 16S rRNA where it nucleates assembly of the body of the 30S subunit. Functionally, with S5 and S12 plays an important role in translational accuracy. The sequence is that of Small ribosomal subunit protein uS4c (rps4) from Gracilaria tenuistipitata var. liui (Red alga).